A 216-amino-acid chain; its full sequence is Phosphatidylserine decarboxylase proenzyme (216 aa).

Residue S183 is the Schiff-base intermediate with substrate; via pyruvic acid of the active site. A Pyruvic acid (Ser); by autocatalysis modification is found at S183.

Belongs to the phosphatidylserine decarboxylase family. PSD-A subfamily. As to quaternary structure, heterodimer of a large membrane-associated beta subunit and a small pyruvoyl-containing alpha subunit. Pyruvate is required as a cofactor. Post-translationally, is synthesized initially as an inactive proenzyme. Formation of the active enzyme involves a self-maturation process in which the active site pyruvoyl group is generated from an internal serine residue via an autocatalytic post-translational modification. Two non-identical subunits are generated from the proenzyme in this reaction, and the pyruvate is formed at the N-terminus of the alpha chain, which is derived from the carboxyl end of the proenzyme. The post-translation cleavage follows an unusual pathway, termed non-hydrolytic serinolysis, in which the side chain hydroxyl group of the serine supplies its oxygen atom to form the C-terminus of the beta chain, while the remainder of the serine residue undergoes an oxidative deamination to produce ammonia and the pyruvoyl prosthetic group on the alpha chain.

The protein resides in the cell membrane. It catalyses the reaction a 1,2-diacyl-sn-glycero-3-phospho-L-serine + H(+) = a 1,2-diacyl-sn-glycero-3-phosphoethanolamine + CO2. The protein operates within phospholipid metabolism; phosphatidylethanolamine biosynthesis; phosphatidylethanolamine from CDP-diacylglycerol: step 2/2. Functionally, catalyzes the formation of phosphatidylethanolamine (PtdEtn) from phosphatidylserine (PtdSer). The sequence is that of Phosphatidylserine decarboxylase proenzyme from Cupriavidus taiwanensis (strain DSM 17343 / BCRC 17206 / CCUG 44338 / CIP 107171 / LMG 19424 / R1) (Ralstonia taiwanensis (strain LMG 19424)).